Consider the following 473-residue polypeptide: Pre-mRNA-splicing factor prp5 (473 aa).

7 WD repeats span residues 161 to 191, 203 to 233, 245 to 275, 287 to 317, 329 to 358, 370 to 399, and 419 to 449; these read GHLG…KIWD, GHIA…KCWD, GHLS…RVWD, GHKS…RLWD, HHKK…KHWK, GHNA…CFWD, and DSEA…KIYK.

It belongs to the WD repeat PRL1/PRL2 family. As to quaternary structure, belongs to the 40S cdc5-associated complex (or cwf complex), a spliceosome sub-complex reminiscent of a late-stage spliceosome composed of the U2, U5 and U6 snRNAs and at least brr2, cdc5, cwf2/prp3, cwf3/syf1, cwf4/syf3, cwf5/ecm2, spp42/cwf6, cwf7/spf27, cwf8, cwf9, cwf10, cwf11, cwf12, prp45/cwf13, cwf14, cwf15, cwf16, cwf17, cwf18, cwf19, cwf20, cwf21, cwf22, cwf23, cwf24, cwf25, cwf26, cyp7/cwf27, cwf28, cwf29/ist3, lea1, msl1, prp5/cwf1, prp10, prp12/sap130, prp17, prp22, sap61, sap62, sap114, sap145, slu7, smb1, smd1, smd3, smf1, smg1 and syf2.

The protein resides in the nucleus. Functionally, required for both cell cycle progression at G2/M and pre-mRNA splicing. Interacts genetically with the PRP4 kinase. The protein is Pre-mRNA-splicing factor prp5 (prp5) of Schizosaccharomyces pombe (strain 972 / ATCC 24843) (Fission yeast).